The sequence spans 444 residues: MTSHAPESGGLVTESTLGASNSSQTIENKGLTILGISGRRLAAVLIGWFFVIFDGYDLIVYGTVQSALAKEWNLSSATLGTIGSTAFFGMAIGAVFIGRLSDRVGRKAAVIGSVLILSVFTMLCAFAPNPWVFGAFRFIAGLGLGGLVPSVNAMTSDLVPRKTMSAWATVMMSGVPIGGSIAAVLALVVVPSSEEWGWRFMFLIALIPLVVGLPIAMKVIPSDKAIKADHDIREGHDEPAGFKDLLVDRYRWISIWFALATFVTLLAWYGLGTWLPRLMETAGYEFGHALMFTLALNLGAVIGSVVTAWAGDRFGPIRSGVIAAGIAGIALLLLLTYPPVTAVYVILILAGVGTHGTQILIIAAVANFYPSNLRGTALGWALGVGRIGAVVAPQLAGLLLAWNLGVNSNFIMFGTAALLSALALSVLLRLQKTYSVTHKVEIQG.

Transmembrane regions (helical) follow at residues 42-64 (AAVL…YGTV), 79-101 (LGTI…GRLS), 108-127 (AAVI…CAFA), 131-153 (WVFG…SVNA), 166-188 (AWAT…LALV), 198-220 (WRFM…MKVI), 252-274 (WISI…LGTW), 289-311 (ALMF…AWAG), 318-340 (RSGV…YPPV), 344-366 (YVIL…AAVA), 378-400 (LGWA…GLLL), and 410-428 (FIMF…SVLL).

It belongs to the major facilitator superfamily. Aromatic acid:H(+) symporter (AAHS) (TC 2.A.1.15) family.

It is found in the cell membrane. Transport of gentisate (2,5-dihydroxybenzoate) into the cell. Does not transport 3-hydroxybenzoate or benzoate. The chain is Gentisate transporter (genK) from Corynebacterium glutamicum (strain ATCC 13032 / DSM 20300 / JCM 1318 / BCRC 11384 / CCUG 27702 / LMG 3730 / NBRC 12168 / NCIMB 10025 / NRRL B-2784 / 534).